Consider the following 129-residue polypeptide: Small ribosomal subunit protein uS11 (129 aa).

This sequence belongs to the universal ribosomal protein uS11 family. Part of the 30S ribosomal subunit. Interacts with proteins S7 and S18. Binds to IF-3.

Located on the platform of the 30S subunit, it bridges several disparate RNA helices of the 16S rRNA. Forms part of the Shine-Dalgarno cleft in the 70S ribosome. This is Small ribosomal subunit protein uS11 from Lawsonia intracellularis (strain PHE/MN1-00).